Consider the following 72-residue polypeptide: Cytochrome b-c1 complex subunit 8-1, mitochondrial (72 aa).

Over 1-41 (MGKQPVKLKAVVYALSPFQQKIMTGLWKDLPEKIHHKVSEN) the chain is Mitochondrial matrix. A helical membrane pass occupies residues 42–58 (WISATLLVTPVVGTYWY). The Mitochondrial intermembrane portion of the chain corresponds to 59-72 (AQYFKEQEKLEHRF).

It belongs to the UQCRQ/QCR8 family. As to quaternary structure, component of the ubiquinol-cytochrome c oxidoreductase (cytochrome b-c1 complex, complex III, CIII), a multisubunit enzyme composed of 10 subunits. The complex is composed of 3 respiratory subunits cytochrome b (MT-CYB), cytochrome c1 (CYC1-1 or CYC1-2) and Rieske protein (UCR1-1 or UCR1-2), 2 core protein subunits MPPalpha1 (or MPPalpha2) and MPPB, and 5 low-molecular weight protein subunits QCR7-1 (or QCR7-2), UCRQ-1 (or UCRQ-2), QCR9, UCRY and probably QCR6-1 (or QCR6-2). The complex exists as an obligatory dimer and forms supercomplexes (SCs) in the inner mitochondrial membrane with NADH-ubiquinone oxidoreductase (complex I, CI), resulting in different assemblies (supercomplexes SCI(1)III(2) and SCI(2)III(4)).

Its subcellular location is the mitochondrion inner membrane. Functionally, component of the ubiquinol-cytochrome c oxidoreductase, a multisubunit transmembrane complex that is part of the mitochondrial electron transport chain which drives oxidative phosphorylation. The respiratory chain contains 3 multisubunit complexes succinate dehydrogenase (complex II, CII), ubiquinol-cytochrome c oxidoreductase (cytochrome b-c1 complex, complex III, CIII) and cytochrome c oxidase (complex IV, CIV), that cooperate to transfer electrons derived from NADH and succinate to molecular oxygen, creating an electrochemical gradient over the inner membrane that drives transmembrane transport and the ATP synthase. The cytochrome b-c1 complex catalyzes electron transfer from ubiquinol to cytochrome c, linking this redox reaction to translocation of protons across the mitochondrial inner membrane, with protons being carried across the membrane as hydrogens on the quinol. In the process called Q cycle, 2 protons are consumed from the matrix, 4 protons are released into the intermembrane space and 2 electrons are passed to cytochrome c. The protein is Cytochrome b-c1 complex subunit 8-1, mitochondrial (UCRQ-1) of Arabidopsis thaliana (Mouse-ear cress).